A 718-amino-acid chain; its full sequence is K(+)-insensitive pyrophosphate-energized proton pump (718 aa).

6 helical membrane-spanning segments follow: residues 6 to 26, 54 to 76, 81 to 103, 112 to 132, 133 to 153, and 168 to 188; these read AVLV…IWAI, LTRQ…WYLL, AIGF…HVSV, AASL…AITG, LLVA…LTVW, and VSLG…GGIF. A substrate-binding site is contributed by lysine 190. Positions 193, 197, 220, and 223 each coordinate Mg(2+). 6 consecutive transmembrane segments (helical) span residues 240-260, 265-285, 300-320, 335-355, 385-405, and 413-433; these read AVTV…SDIL, LYPL…TFFV, GLIA…TLTV, GTNL…IVVI, GLAV…GGII, and LFGT…IVAL. Aspartate 441 is a Mg(2+) binding site. Helical transmembrane passes span 472–492, 524–544, 593–613, and 620–640; these read AVTK…LFAA, YVVA…GMAM, IIPS…VLLI, and AFAA…FVAI. Ca(2+)-binding residues include aspartate 650, aspartate 682, and aspartate 686. Lysine 689 lines the substrate pocket. Residues 695–715 traverse the membrane as a helical segment; that stretch reads AVNPAIKITNIVALLLLAVLA.

The protein belongs to the H(+)-translocating pyrophosphatase (TC 3.A.10) family. K(+)-insensitive subfamily. In terms of assembly, homodimer. Mg(2+) serves as cofactor.

It is found in the cell inner membrane. It carries out the reaction diphosphate + H2O + H(+)(in) = 2 phosphate + 2 H(+)(out). Proton pump that utilizes the energy of pyrophosphate hydrolysis as the driving force for proton movement across the membrane. Generates a proton motive force. The sequence is that of K(+)-insensitive pyrophosphate-energized proton pump from Brucella anthropi (strain ATCC 49188 / DSM 6882 / CCUG 24695 / JCM 21032 / LMG 3331 / NBRC 15819 / NCTC 12168 / Alc 37) (Ochrobactrum anthropi).